A 294-amino-acid chain; its full sequence is Tyrosine recombinase XerC (294 aa).

Positions Met1–Val85 constitute a Core-binding (CB) domain. Residues Lys106–Asp283 form the Tyr recombinase domain. Residues Arg145, Lys169, His235, Arg238, and His261 contribute to the active site. The O-(3'-phospho-DNA)-tyrosine intermediate role is filled by Tyr270.

It belongs to the 'phage' integrase family. XerC subfamily. Forms a cyclic heterotetrameric complex composed of two molecules of XerC and two molecules of XerD.

It localises to the cytoplasm. Functionally, site-specific tyrosine recombinase, which acts by catalyzing the cutting and rejoining of the recombining DNA molecules. The XerC-XerD complex is essential to convert dimers of the bacterial chromosome into monomers to permit their segregation at cell division. It also contributes to the segregational stability of plasmids. This is Tyrosine recombinase XerC from Xylella fastidiosa (strain M23).